The chain runs to 260 residues: tRNA pseudouridine synthase C (260 aa).

Aspartate 54 is a catalytic residue.

The protein belongs to the pseudouridine synthase RluA family.

The catalysed reaction is uridine(65) in tRNA = pseudouridine(65) in tRNA. In terms of biological role, responsible for synthesis of pseudouridine from uracil-65 in transfer RNAs. In Salmonella typhi, this protein is tRNA pseudouridine synthase C (truC).